Reading from the N-terminus, the 235-residue chain is Ribonuclease 3 (235 aa).

One can recognise an RNase III domain in the interval 8 to 137 (PAELARRIGI…VIGAIFLSGG (130 aa)). Glu50 lines the Mg(2+) pocket. Asp54 is a catalytic residue. 2 residues coordinate Mg(2+): Asp123 and Glu126. The active site involves Glu126. In terms of domain architecture, DRBM spans 163-232 (DNKTAFQEWV…AGRAMREWAG (70 aa)). The tract at residues 211–235 (QGRTKKEAEQQAAGRAMREWAGRKG) is disordered. Residues 226–235 (AMREWAGRKG) show a composition bias toward basic and acidic residues.

The protein belongs to the ribonuclease III family. As to quaternary structure, homodimer. The cofactor is Mg(2+).

Its subcellular location is the cytoplasm. It catalyses the reaction Endonucleolytic cleavage to 5'-phosphomonoester.. Digests double-stranded RNA. Involved in the processing of primary rRNA transcript to yield the immediate precursors to the large and small rRNAs (23S and 16S). Processes some mRNAs, and tRNAs when they are encoded in the rRNA operon. Processes pre-crRNA and tracrRNA of type II CRISPR loci if present in the organism. The protein is Ribonuclease 3 of Heliobacterium modesticaldum (strain ATCC 51547 / Ice1).